Here is a 201-residue protein sequence, read N- to C-terminus: Recombination protein RecR (201 aa).

The C4-type zinc-finger motif lies at 60 to 75; it reads CSRCGNVDTVDPCTVC. Residues 83–178 enclose the Toprim domain; it reads SIIIVVEDVS…KITRLAHGVP (96 aa).

Belongs to the RecR family.

Functionally, may play a role in DNA repair. It seems to be involved in an RecBC-independent recombinational process of DNA repair. It may act with RecF and RecO. The protein is Recombination protein RecR of Rhizobium leguminosarum bv. trifolii (strain WSM2304).